Reading from the N-terminus, the 1476-residue chain is ABC-type transporter frbG (1476 aa).

Helical transmembrane passes span 26–46, 64–84, 97–117, 122–142, and 146–166; these read LLFE…VLAL, LYYA…VQLI, SIAI…LCHL, SAKP…FDII, and TLWI…GLVL. Asn244 carries an N-linked (GlcNAc...) asparagine glycan. The next 4 helical transmembrane spans lie at 266 to 286, 302 to 322, 380 to 400, and 409 to 429; these read FLAG…QPFL, AGAT…GIAI, LQTM…TWLL, and IPSV…AVMA. Residues 274 to 553 form the ABC transmembrane type-1 1 domain; that stretch reads LALTGFTFAQ…FVHSAVNLML (280 aa). A glycan (N-linked (GlcNAc...) asparagine) is linked at Asn464. 2 consecutive transmembrane segments (helical) span residues 487-507 and 533-553; these read CLVF…IIGF and IFAL…NLML. In terms of domain architecture, ABC transporter 1 spans 619 to 845; it reads IQARDTNIGW…VTAHVHNQTS (227 aa). 652–659 provides a ligand contact to ATP; sequence GPTNSGKS. Asn694, Asn776, Asn805, and Asn842 each carry an N-linked (GlcNAc...) asparagine glycan. The next 5 membrane-spanning stretches (helical) occupy residues 898 to 918, 936 to 956, 1017 to 1037, 1121 to 1141, and 1151 to 1171; these read AVFL…SIWV, YLLV…GGGS, LFAF…SPFV, LGLV…IVIV, and GFLG…GGFI. The ABC transmembrane type-1 2 domain maps to 898–1179; that stretch reads AVFLALCMAL…FIGGWTGLET (282 aa). The 232-residue stretch at 1216–1447 folds into the ABC transporter 2 domain; sequence IVFDDVTASY…LSSSSPTSSP (232 aa). Asn1235 carries N-linked (GlcNAc...) asparagine glycosylation. 1250–1257 contacts ATP; the sequence is GRTGSGKS.

This sequence belongs to the ABC transporter superfamily. ABCC family. Conjugate transporter (TC 3.A.1.208) subfamily.

The protein localises to the cell membrane. Its function is as follows. ABC-type transporter; part of the gene cluster that mediates the biosynthesis of the antifungal antibiotic FR901469, an inhibitor of beta-1,3-glucansynthase, exerting antifungal activity against the pathogenes Candida albicans and Aspergillus fumigatus. FR901469 is a cyclic depsipeptide containing 12 amino acid residues and a fatty acid chain. Probably involved in the secretion of FR901469. The polypeptide is ABC-type transporter frbG (Dothideomycetidae sp. (strain 11243) (Fungal sp. (strain No.11243))).